A 161-amino-acid polypeptide reads, in one-letter code: Ribonuclease P protein component (161 aa).

This sequence belongs to the RnpA family. In terms of assembly, consists of a catalytic RNA component (M1 or rnpB) and a protein subunit.

It catalyses the reaction Endonucleolytic cleavage of RNA, removing 5'-extranucleotides from tRNA precursor.. RNaseP catalyzes the removal of the 5'-leader sequence from pre-tRNA to produce the mature 5'-terminus. It can also cleave other RNA substrates such as 4.5S RNA. The protein component plays an auxiliary but essential role in vivo by binding to the 5'-leader sequence and broadening the substrate specificity of the ribozyme. The polypeptide is Ribonuclease P protein component (Helicobacter pylori (strain Shi470)).